The sequence spans 156 residues: ATP synthase subunit b (156 aa).

A helical membrane pass occupies residues 13-33 (AFIIFVWFCMKFVWPPLMNAI).

This sequence belongs to the ATPase B chain family. As to quaternary structure, F-type ATPases have 2 components, F(1) - the catalytic core - and F(0) - the membrane proton channel. F(1) has five subunits: alpha(3), beta(3), gamma(1), delta(1), epsilon(1). F(0) has three main subunits: a(1), b(2) and c(10-14). The alpha and beta chains form an alternating ring which encloses part of the gamma chain. F(1) is attached to F(0) by a central stalk formed by the gamma and epsilon chains, while a peripheral stalk is formed by the delta and b chains.

The protein localises to the cell inner membrane. Functionally, f(1)F(0) ATP synthase produces ATP from ADP in the presence of a proton or sodium gradient. F-type ATPases consist of two structural domains, F(1) containing the extramembraneous catalytic core and F(0) containing the membrane proton channel, linked together by a central stalk and a peripheral stalk. During catalysis, ATP synthesis in the catalytic domain of F(1) is coupled via a rotary mechanism of the central stalk subunits to proton translocation. In terms of biological role, component of the F(0) channel, it forms part of the peripheral stalk, linking F(1) to F(0). This Shewanella sediminis (strain HAW-EB3) protein is ATP synthase subunit b.